The sequence spans 370 residues: High affinity iron permease ftrA (370 aa).

A run of 7 helical transmembrane segments spans residues 5 to 25 (VFAV…SIIV), 52 to 72 (VWWG…GMIG), 88 to 108 (LWEG…GAAL), 148 to 168 (AMFL…VVFI), 179 to 199 (AFPL…YLLY), 206 to 226 (SLQI…AGLF), and 293 to 313 (YGSV…FVAM). The segment at 335–370 (RKSAEPGNGEQDVEVSTIPSDLQTESKIPKSGASLV) is disordered. Positions 351–360 (TIPSDLQTES) are enriched in polar residues.

The protein belongs to the oxidase-dependent Fe transporter (OFeT) (TC 9.A.10.1) family.

It localises to the cell membrane. In terms of biological role, high affinity iron permease; part of the reductive iron assimilatory system (RIA), a siderophore-independent high affinity iron uptake mechanism. This chain is High affinity iron permease ftrA, found in Aspergillus fumigatus (strain ATCC MYA-4609 / CBS 101355 / FGSC A1100 / Af293) (Neosartorya fumigata).